The chain runs to 38 residues: TGVTYDHRALVIDGXXXVLVSGSIHYPRAASSWYAVET.

It belongs to the glycosyl hydrolase 35 family. In terms of assembly, heterodimer of a large and a small subunit. Post-translationally, the small subunit is N-glycosylated.

The enzyme catalyses Hydrolysis of terminal non-reducing beta-D-galactose residues in beta-D-galactosides.. Functionally, involved in cell wall degradation. Degrades polysaccharides containing beta-(1--&gt;4)-linked galactans, acting as an exo-(1--&gt;4)-beta-D-galactanase. This is Beta-galactosidase from Hordeum vulgare (Barley).